Reading from the N-terminus, the 211-residue chain is ATP-dependent Clp protease proteolytic subunit (211 aa).

The active-site Nucleophile is the Ser-114. His-139 is an active-site residue.

The protein belongs to the peptidase S14 family. Fourteen ClpP subunits assemble into 2 heptameric rings which stack back to back to give a disk-like structure with a central cavity, resembling the structure of eukaryotic proteasomes.

Its subcellular location is the cytoplasm. The catalysed reaction is Hydrolysis of proteins to small peptides in the presence of ATP and magnesium. alpha-casein is the usual test substrate. In the absence of ATP, only oligopeptides shorter than five residues are hydrolyzed (such as succinyl-Leu-Tyr-|-NHMec, and Leu-Tyr-Leu-|-Tyr-Trp, in which cleavage of the -Tyr-|-Leu- and -Tyr-|-Trp bonds also occurs).. Cleaves peptides in various proteins in a process that requires ATP hydrolysis. Has a chymotrypsin-like activity. Plays a major role in the degradation of misfolded proteins. The protein is ATP-dependent Clp protease proteolytic subunit of Pseudomonas fluorescens (strain ATCC BAA-477 / NRRL B-23932 / Pf-5).